A 293-amino-acid chain; its full sequence is MSAPVFGRLLTAMVTPMTFDGAVDLRRTGELAHKLVEEQNNDGIVVNGTTGESPTTTDSEKAEIVKAVVEAVGSDAAVVAGVGTNDTAHTIELAHQAAEAGADGLLVVTPYYSKPSQAGIIEHFTAVADATDLPIMLYDIPGRTGTPIETKTLIELADHARIVAVKDAKGLVVESATVMASTTLAYYSGDDAITPALLSVGGVGLVGTSTHFTGRRMHEVIDAYVDGRIDEALSTYREILPVLTGVFAAQGATMVKAGLAHQGFTVGRVRPPQTMPTPEQAETFFGVLDRTQL.

Pyruvate is bound at residue Thr50. Tyr138 serves as the catalytic Proton donor/acceptor. Residue Lys166 is the Schiff-base intermediate with substrate of the active site. Position 206 (Val206) interacts with pyruvate.

Belongs to the DapA family. As to quaternary structure, homotetramer; dimer of dimers.

It is found in the cytoplasm. The enzyme catalyses L-aspartate 4-semialdehyde + pyruvate = (2S,4S)-4-hydroxy-2,3,4,5-tetrahydrodipicolinate + H2O + H(+). It functions in the pathway amino-acid biosynthesis; L-lysine biosynthesis via DAP pathway; (S)-tetrahydrodipicolinate from L-aspartate: step 3/4. Functionally, catalyzes the condensation of (S)-aspartate-beta-semialdehyde [(S)-ASA] and pyruvate to 4-hydroxy-tetrahydrodipicolinate (HTPA). This is 4-hydroxy-tetrahydrodipicolinate synthase from Cutibacterium acnes (strain DSM 16379 / KPA171202) (Propionibacterium acnes).